A 1706-amino-acid chain; its full sequence is Brefeldin A-inhibited guanine nucleotide-exchange protein 4 (1706 aa).

The 188-residue stretch at 555–742 folds into the SEC7 domain; it reads MLEQRRAYKI…GSLYDRVVKE (188 aa). The active site involves Glu657.

In terms of assembly, homodimer.

It localises to the cytoplasm. Its subcellular location is the cytosol. It is found in the membrane. Its activity is regulated as follows. Inhibited by brefeldin A. In terms of biological role, activates the ARF proteins by exchanging bound GDP for free GTP. Plays a role in vesicular protein sorting. The sequence is that of Brefeldin A-inhibited guanine nucleotide-exchange protein 4 (BIG4) from Arabidopsis thaliana (Mouse-ear cress).